The sequence spans 306 residues: UDP-3-O-acyl-N-acetylglucosamine deacetylase (306 aa).

Residues H79, H238, and D242 each contribute to the Zn(2+) site. H265 acts as the Proton donor in catalysis.

Belongs to the LpxC family. Requires Zn(2+) as cofactor.

The catalysed reaction is a UDP-3-O-[(3R)-3-hydroxyacyl]-N-acetyl-alpha-D-glucosamine + H2O = a UDP-3-O-[(3R)-3-hydroxyacyl]-alpha-D-glucosamine + acetate. Its pathway is glycolipid biosynthesis; lipid IV(A) biosynthesis; lipid IV(A) from (3R)-3-hydroxytetradecanoyl-[acyl-carrier-protein] and UDP-N-acetyl-alpha-D-glucosamine: step 2/6. Its function is as follows. Catalyzes the hydrolysis of UDP-3-O-myristoyl-N-acetylglucosamine to form UDP-3-O-myristoylglucosamine and acetate, the committed step in lipid A biosynthesis. This is UDP-3-O-acyl-N-acetylglucosamine deacetylase from Shewanella piezotolerans (strain WP3 / JCM 13877).